The primary structure comprises 408 residues: Protein SPATA31F3 (408 aa).

The helical transmembrane segment at 11 to 31 (VGYPFYTYGSIIIIALIIWQV) threads the bilayer. The tract at residues 51–71 (QKVKQRAKEKTPRARRHSRKE) is disordered. Position 152 is a phosphoserine (S152). Disordered regions lie at residues 297-316 (TKTK…MKGA) and 351-408 (LPLS…SASS). Residues 351 to 392 (LPLSSGSSKRSPLLTCATQPENPSHVSVSTSAEGTCLPQEST) show a composition bias toward polar residues.

This sequence belongs to the SPATA31 family.

It is found in the membrane. This Bos taurus (Bovine) protein is Protein SPATA31F3 (SPATA31F3).